Reading from the N-terminus, the 196-residue chain is Elongation factor Ts (196 aa).

The involved in Mg(2+) ion dislocation from EF-Tu stretch occupies residues 80–83; that stretch reads TDFV.

Belongs to the EF-Ts family.

Its subcellular location is the cytoplasm. Functionally, associates with the EF-Tu.GDP complex and induces the exchange of GDP to GTP. It remains bound to the aminoacyl-tRNA.EF-Tu.GTP complex up to the GTP hydrolysis stage on the ribosome. The sequence is that of Elongation factor Ts from Thermosipho melanesiensis (strain DSM 12029 / CIP 104789 / BI429).